Consider the following 218-residue polypeptide: Large ribosomal subunit protein uL3 (218 aa).

A disordered region spans residues 126–169; that stretch reads HGFSRGPMTHGSKNHRQPGSIGAGTTPGRIYPGKRMSGRYGGKK.

This sequence belongs to the universal ribosomal protein uL3 family. As to quaternary structure, part of the 50S ribosomal subunit. Forms a cluster with proteins L14 and L19.

Functionally, one of the primary rRNA binding proteins, it binds directly near the 3'-end of the 23S rRNA, where it nucleates assembly of the 50S subunit. The polypeptide is Large ribosomal subunit protein uL3 (Synechococcus sp. (strain CC9902)).